We begin with the raw amino-acid sequence, 521 residues long: Vang-like protein 2-A (521 aa).

Residues 1–81 are disordered; that stretch reads MDNDSQYSGY…TTVVTGTSEH (81 aa). The Cytoplasmic segment spans residues 1 to 108; the sequence is MDNDSQYSGY…AKLDCSRHLG (108 aa). A compositionally biased stretch (basic residues) spans 15-33; sequence GHSRSSRKHRDRRERHRSK. The span at 57 to 67 shows a compositional bias: basic and acidic residues; it reads ESTRGEDRDDN. Residues 69 to 81 show a composition bias toward low complexity; it reads GETTTVVTGTSEH. The helical transmembrane segment at 109–129 threads the bilayer; that stretch reads VVIGGALALLSFLTPIAFMLL. At 130–147 the chain is on the extracellular side; sequence PQILWREDLEQCGTACEG. The chain crosses the membrane as a helical span at residues 148 to 168; it reads LFISVAFKLLILLLGSWALFF. The Cytoplasmic segment spans residues 169–178; the sequence is RRPKAFFPRV. A helical membrane pass occupies residues 179-199; that stretch reads FVFRALLMVLVFLLVVSYWLF. Over 200–218 the chain is Extracellular; the sequence is YGVRILESRDKNYQGIVQY. Residues 219–239 traverse the membrane as a helical segment; the sequence is AVSLVDALLFVHYLAVVLLEL. Residues 240 to 521 lie on the Cytoplasmic side of the membrane; it reads RQLQPQFTIK…VMRLQSETSV (282 aa). A PDZ-binding motif is present at residues 518 to 521; the sequence is ETSV.

The protein belongs to the Vang family. As to quaternary structure, interacts with dvl/dsh. Interacts with prickle3. As to expression, during gastrulation, broadly expressed throughout the marginal zone and animal cap region. From the neurula stages, expression becomes concentrated in neural tissues, in the neural plate and neural tube.

The protein localises to the cell membrane. Has a role in non-canonical Wnt/planar cell polarity (PCP) signaling; can recruit dvl/dsh and prickle from the cytoplasm to the plasma membrane. Acts in a PCP complex to regulate the polarized assembly of fibronectrin on the surface of the mesoderm during gastrulation. Regulates convergent extension cell movements in both dorsal mesoderm and neural tissue during gastrulation, without affecting cell fate. Regulates neural fold closure during neurulation. May be required for cell surface localization of fzd3 and fzd6 in the inner ear. In Xenopus laevis (African clawed frog), this protein is Vang-like protein 2-A (vangl2-a).